The chain runs to 114 residues: Cytochrome c oxidase assembly protein cox16, mitochondrial (114 aa).

Residues 29–49 (PFLLFGLPFMSVIVAGSFILT) form a helical membrane-spanning segment.

This sequence belongs to the COX16 family.

Its subcellular location is the mitochondrion inner membrane. In terms of biological role, required for the assembly of the mitochondrial respiratory chain complex IV (CIV), also known as cytochrome c oxidase. May participate in merging the COX1 and COX2 assembly lines. The chain is Cytochrome c oxidase assembly protein cox16, mitochondrial (cox-9) from Neurospora crassa (strain ATCC 24698 / 74-OR23-1A / CBS 708.71 / DSM 1257 / FGSC 987).